Consider the following 152-residue polypeptide: Transcription factor ATOH7 (152 aa).

The region spanning 40 to 92 (RRRLAANARERRRMQGLNTAFDRLRRVVPQWGQDKKLSKYETLQMALSYIMAL) is the bHLH domain.

Forms a heterodimer with TCF3 isoform E47; interaction may be required for DNA-binding in certain situations.

The protein localises to the nucleus. It is found in the perikaryon. The protein resides in the cell projection. It localises to the axon. Functionally, transcription factor that binds to DNA at the consensus sequence 5'-CAG[GC]TG-3'. Dimerization with TCF3 isoform E47 may be required in certain situations. Binds to gene promoters and enhancer elements, and thereby regulates a transcriptional program of retinal ganglion cell (RGC) determinant genes. Although the exact mechanism is not certain, retinal transcription regulation by ATOH7 has a role in RGC determination and survival, photoreceptor population development, targeting of RGC axons to the optic nerve and development of the retino-hypothalamic tract. Binds to its own promoter and enhancer sequences, suggesting autoregulation of ATOH7 transcription. Required for retinal circadian rhythm photoentrainment. Plays a role in brainstem auditory signaling and binaural processing. This is Transcription factor ATOH7 from Homo sapiens (Human).